We begin with the raw amino-acid sequence, 349 residues long: Dihydroorotate dehydrogenase (quinone) (349 aa).

Residues 67–71 (AGLDK) and Thr91 each bind FMN. Lys71 is a binding site for substrate. Residue 116–120 (NRLGF) coordinates substrate. The FMN site is built by Asn147 and Asn180. Asn180 is a binding site for substrate. Ser183 serves as the catalytic Nucleophile. Asn185 is a binding site for substrate. Residues Lys225 and Thr253 each contribute to the FMN site. Substrate is bound at residue 254 to 255 (NT). FMN-binding positions include Gly276, Gly305, and 326 to 327 (YT).

It belongs to the dihydroorotate dehydrogenase family. Type 2 subfamily. In terms of assembly, monomer. FMN is required as a cofactor.

The protein localises to the cell membrane. It catalyses the reaction (S)-dihydroorotate + a quinone = orotate + a quinol. It functions in the pathway pyrimidine metabolism; UMP biosynthesis via de novo pathway; orotate from (S)-dihydroorotate (quinone route): step 1/1. Catalyzes the conversion of dihydroorotate to orotate with quinone as electron acceptor. This Bordetella pertussis (strain Tohama I / ATCC BAA-589 / NCTC 13251) protein is Dihydroorotate dehydrogenase (quinone).